The chain runs to 208 residues: Uracil phosphoribosyltransferase (208 aa).

5-phospho-alpha-D-ribose 1-diphosphate is bound by residues Arg-78, Arg-103, and 130-138 (DPMLATGGS). Residues Ile-193 and 198–200 (GDA) contribute to the uracil site. Asp-199 contributes to the 5-phospho-alpha-D-ribose 1-diphosphate binding site.

The protein belongs to the UPRTase family. The cofactor is Mg(2+).

It catalyses the reaction UMP + diphosphate = 5-phospho-alpha-D-ribose 1-diphosphate + uracil. Its pathway is pyrimidine metabolism; UMP biosynthesis via salvage pathway; UMP from uracil: step 1/1. Its activity is regulated as follows. Allosterically activated by GTP. In terms of biological role, catalyzes the conversion of uracil and 5-phospho-alpha-D-ribose 1-diphosphate (PRPP) to UMP and diphosphate. This Wolinella succinogenes (strain ATCC 29543 / DSM 1740 / CCUG 13145 / JCM 31913 / LMG 7466 / NCTC 11488 / FDC 602W) (Vibrio succinogenes) protein is Uracil phosphoribosyltransferase.